Consider the following 186-residue polypeptide: Glutathione peroxidase 7 (186 aa).

A signal peptide spans 1–18 (MVAAVATAWLLLWAAACA). C56 is a catalytic residue.

The protein belongs to the glutathione peroxidase family.

Its subcellular location is the secreted. It catalyses the reaction 2 glutathione + H2O2 = glutathione disulfide + 2 H2O. It protects esophageal epithelia from hydrogen peroxide-induced oxidative stress. It suppresses acidic bile acid-induced reactive oxygen species (ROS) and protects against oxidative DNA damage and double-strand breaks. The polypeptide is Glutathione peroxidase 7 (Gpx7) (Mus musculus (Mouse)).